Consider the following 615-residue polypeptide: Deoxyribodipyrimidine photo-lyase (615 aa).

A disordered region spans residues 1–53 (MAPSKRKASAPPQTSHVNGNPSADKKRKTTTDAPPTNPNTSSDPLRAPHPFYK). Positions 11–21 (PPQTSHVNGNP) are enriched in polar residues. The segment covering 31 to 40 (TDAPPTNPNT) has biased composition (low complexity). The 142-residue stretch at 108 to 249 (QAVVHWFKMD…AADVVHDTCV (142 aa)) folds into the Photolyase/cryptochrome alpha/beta domain. Tyr352 is an FAD binding site. Arg356 contacts DNA. FAD is bound at residue 364 to 368 (TSNLS). 2 interaction with DNA regions span residues 407-414 (EVAWRDFY) and 474-475 (NR). Residue 505 to 507 (DGD) coordinates FAD. A DNA-binding site is contributed by Gln537.

This sequence belongs to the DNA photolyase class-1 family. Monomer. FAD serves as cofactor. The cofactor is (6R)-5,10-methylene-5,6,7,8-tetrahydrofolate.

It catalyses the reaction cyclobutadipyrimidine (in DNA) = 2 pyrimidine residues (in DNA).. Its function is as follows. Involved in repair of UV radiation-induced DNA damage. Catalyzes the light-dependent monomerization (300-600 nm) of cyclobutyl pyrimidine dimers (in cis-syn configuration), which are formed between adjacent bases on the same DNA strand upon exposure to ultraviolet radiation. This is Deoxyribodipyrimidine photo-lyase (phr) from Neurospora crassa (strain ATCC 24698 / 74-OR23-1A / CBS 708.71 / DSM 1257 / FGSC 987).